Here is a 54-residue protein sequence, read N- to C-terminus: Hydrophobic protein RCI2B (54 aa).

Transmembrane regions (helical) follow at residues 2-22 (STAT…GVFL) and 32-52 (ICLI…LYII).

The protein belongs to the UPF0057 (PMP3) family.

Its subcellular location is the membrane. This is Hydrophobic protein RCI2B (RCI2B) from Arabidopsis thaliana (Mouse-ear cress).